The sequence spans 172 residues: MDLNNYIASIENYPQEGITFRDISPLMADGKAYSYAVREIVQYAADKDIDMIVGPEARGFIVGCPVAYALGIGFAPVRKPGKLPREVISANYEKEYGLDTLTMHADAIKPGQRVLIVDDLLATGGTVKATIEMIEKLGGVVAGCAFLVELDGLNGRKAIEGYDTKVLMNFPG.

It belongs to the purine/pyrimidine phosphoribosyltransferase family. In terms of assembly, homodimer.

It is found in the cytoplasm. It catalyses the reaction AMP + diphosphate = 5-phospho-alpha-D-ribose 1-diphosphate + adenine. It functions in the pathway purine metabolism; AMP biosynthesis via salvage pathway; AMP from adenine: step 1/1. Functionally, catalyzes a salvage reaction resulting in the formation of AMP, that is energically less costly than de novo synthesis. The polypeptide is Adenine phosphoribosyltransferase (Streptococcus agalactiae serotype Ia (strain ATCC 27591 / A909 / CDC SS700)).